The following is an 82-amino-acid chain: ATP synthase subunit c, chloroplastic (82 aa).

2 consecutive transmembrane segments (helical) span residues 4–24 (IISA…AIGP) and 57–77 (LAFM…LLFA).

It belongs to the ATPase C chain family. As to quaternary structure, F-type ATPases have 2 components, F(1) - the catalytic core - and F(0) - the membrane proton channel. F(1) has five subunits: alpha(3), beta(3), gamma(1), delta(1), epsilon(1). F(0) has four main subunits: a(1), b(1), b'(1) and c(10-14). The alpha and beta chains form an alternating ring which encloses part of the gamma chain. F(1) is attached to F(0) by a central stalk formed by the gamma and epsilon chains, while a peripheral stalk is formed by the delta, b and b' chains.

It localises to the plastid. The protein localises to the chloroplast thylakoid membrane. Functionally, f(1)F(0) ATP synthase produces ATP from ADP in the presence of a proton or sodium gradient. F-type ATPases consist of two structural domains, F(1) containing the extramembraneous catalytic core and F(0) containing the membrane proton channel, linked together by a central stalk and a peripheral stalk. During catalysis, ATP synthesis in the catalytic domain of F(1) is coupled via a rotary mechanism of the central stalk subunits to proton translocation. Its function is as follows. Key component of the F(0) channel; it plays a direct role in translocation across the membrane. A homomeric c-ring of between 10-14 subunits forms the central stalk rotor element with the F(1) delta and epsilon subunits. In Antithamnion sp. (Red alga), this protein is ATP synthase subunit c, chloroplastic.